Reading from the N-terminus, the 275-residue chain is Dermonecrotic toxin SpeSicTox-betaIIA1 (275 aa).

His-5 is a catalytic residue. Residues Glu-25 and Asp-27 each contribute to the Mg(2+) site. Catalysis depends on His-41, which acts as the Nucleophile. 2 disulfides stabilise this stretch: Cys-45-Cys-51 and Cys-47-Cys-190. Asp-85 lines the Mg(2+) pocket.

The protein belongs to the arthropod phospholipase D family. Class II subfamily. Requires Mg(2+) as cofactor. In terms of tissue distribution, expressed by the venom gland.

Its subcellular location is the secreted. It carries out the reaction an N-(acyl)-sphingosylphosphocholine = an N-(acyl)-sphingosyl-1,3-cyclic phosphate + choline. The enzyme catalyses an N-(acyl)-sphingosylphosphoethanolamine = an N-(acyl)-sphingosyl-1,3-cyclic phosphate + ethanolamine. It catalyses the reaction a 1-acyl-sn-glycero-3-phosphocholine = a 1-acyl-sn-glycero-2,3-cyclic phosphate + choline. The catalysed reaction is a 1-acyl-sn-glycero-3-phosphoethanolamine = a 1-acyl-sn-glycero-2,3-cyclic phosphate + ethanolamine. In terms of biological role, dermonecrotic toxins cleave the phosphodiester linkage between the phosphate and headgroup of certain phospholipids (sphingolipid and lysolipid substrates), forming an alcohol (often choline) and a cyclic phosphate. This toxin acts on sphingomyelin (SM). It may also act on ceramide phosphoethanolamine (CPE), lysophosphatidylcholine (LPC) and lysophosphatidylethanolamine (LPE), but not on lysophosphatidylserine (LPS), and lysophosphatidylglycerol (LPG). It acts by transphosphatidylation, releasing exclusively cyclic phosphate products as second products. Induces dermonecrosis, hemolysis, increased vascular permeability, edema, inflammatory response, and platelet aggregation. The chain is Dermonecrotic toxin SpeSicTox-betaIIA1 from Sicarius peruensis (Six-eyed sand spider).